A 251-amino-acid chain; its full sequence is HTH-type transcriptional regulator UlaR (251 aa).

Residues 3 to 58 form the HTH deoR-type domain; it reads EAQRHQILLDMLAQLGFVTVENVIERLGISPATARRDINKLDESGKLKKVRNGAEA. The H-T-H motif DNA-binding region spans 20–39; that stretch reads VTVENVIERLGISPATARRD.

The protein resides in the cytoplasm. In terms of biological role, represses ulaG and the ulaABCDEF operon. This is HTH-type transcriptional regulator UlaR from Salmonella arizonae (strain ATCC BAA-731 / CDC346-86 / RSK2980).